Here is a 600-residue protein sequence, read N- to C-terminus: Kynurenine 3-monooxygenase (600 aa).

The segment at 217 to 242 is disordered; it reads GDSCADEPSGCGGRKQATTKSQGSEY.

It belongs to the aromatic-ring hydroxylase family. KMO subfamily. Requires FAD as cofactor.

It is found in the mitochondrion outer membrane. It carries out the reaction L-kynurenine + NADPH + O2 + H(+) = 3-hydroxy-L-kynurenine + NADP(+) + H2O. It functions in the pathway cofactor biosynthesis; NAD(+) biosynthesis; quinolinate from L-kynurenine: step 1/3. Its function is as follows. Catalyzes the hydroxylation of L-kynurenine (L-Kyn) to form 3-hydroxy-L-kynurenine (L-3OHKyn). Required for synthesis of quinolinic acid. This chain is Kynurenine 3-monooxygenase, found in Mycosarcoma maydis (Corn smut fungus).